A 480-amino-acid chain; its full sequence is Beta-amyrin 28-monooxygenase (480 aa).

Residues 3–23 (VFFLSLLLICVLSVSIRLYLL) traverse the membrane as a helical segment. Cysteine 427 is a heme binding site.

This sequence belongs to the cytochrome P450 family. Requires heme as cofactor. In terms of tissue distribution, expressed in leaves, stems and fruit skin.

The protein resides in the membrane. The enzyme catalyses beta-amyrin + 3 reduced [NADPH--hemoprotein reductase] + 3 O2 = oleanolate + 3 oxidized [NADPH--hemoprotein reductase] + 4 H2O + 4 H(+). In terms of biological role, catalyzes the carboxylation of beta-amyrin at the C-28 position to form oleanolic acid. May be involved in saponin biosynthesis in fruit skin. In Vitis vinifera (Grape), this protein is Beta-amyrin 28-monooxygenase.